Consider the following 207-residue polypeptide: Guanylate kinase (207 aa).

The region spanning 4–184 (GTLYIVSAPS…ALTDLKTIIR (181 aa)) is the Guanylate kinase-like domain. 11 to 18 (APSGAGKS) provides a ligand contact to ATP.

This sequence belongs to the guanylate kinase family.

It localises to the cytoplasm. The enzyme catalyses GMP + ATP = GDP + ADP. Essential for recycling GMP and indirectly, cGMP. The polypeptide is Guanylate kinase (Escherichia coli O157:H7).